Reading from the N-terminus, the 208-residue chain is Putative chemokine-related protein FP248 (208 aa).

Residues 1–23 (MGTGGSLLCGCSLVLSCLCPSAS) form the signal peptide. Asparagine 29 is a glycosylation site (N-linked (GlcNAc...) asparagine).

Its subcellular location is the secreted. The sequence is that of Putative chemokine-related protein FP248 from Homo sapiens (Human).